The following is a 474-amino-acid chain: UDP-N-acetylmuramoylalanine--D-glutamate ligase (474 aa).

134–140 serves as a coordination point for ATP; that stretch reads GSNGKST.

This sequence belongs to the MurCDEF family.

It localises to the cytoplasm. It carries out the reaction UDP-N-acetyl-alpha-D-muramoyl-L-alanine + D-glutamate + ATP = UDP-N-acetyl-alpha-D-muramoyl-L-alanyl-D-glutamate + ADP + phosphate + H(+). The protein operates within cell wall biogenesis; peptidoglycan biosynthesis. Its function is as follows. Cell wall formation. Catalyzes the addition of glutamate to the nucleotide precursor UDP-N-acetylmuramoyl-L-alanine (UMA). This is UDP-N-acetylmuramoylalanine--D-glutamate ligase from Thiobacillus denitrificans (strain ATCC 25259 / T1).